The sequence spans 119 residues: Ribonuclease P protein component (119 aa).

The protein belongs to the RnpA family. Consists of a catalytic RNA component (M1 or rnpB) and a protein subunit.

The enzyme catalyses Endonucleolytic cleavage of RNA, removing 5'-extranucleotides from tRNA precursor.. Functionally, RNaseP catalyzes the removal of the 5'-leader sequence from pre-tRNA to produce the mature 5'-terminus. It can also cleave other RNA substrates such as 4.5S RNA. The protein component plays an auxiliary but essential role in vivo by binding to the 5'-leader sequence and broadening the substrate specificity of the ribozyme. The sequence is that of Ribonuclease P protein component from Clostridium acetobutylicum (strain ATCC 824 / DSM 792 / JCM 1419 / IAM 19013 / LMG 5710 / NBRC 13948 / NRRL B-527 / VKM B-1787 / 2291 / W).